The chain runs to 485 residues: NADH-quinone oxidoreductase subunit N (485 aa).

The next 14 helical transmembrane spans lie at 10 to 30, 40 to 60, 71 to 91, 107 to 127, 129 to 149, 164 to 184, 209 to 229, 248 to 268, 276 to 296, 304 to 324, 336 to 356, 377 to 397, 410 to 430, and 454 to 474; these read ILPEILLALGVIVVMFSGLFL, IFFQVFTLLALIATFAKEYLI, VVFSGFAYTLQLVILVLAVFV, GDFYTLLMLCVLGAMVLTAAH, LVTIYVGLELLSLPMYALIAI, FVLGAIASALLLFGMSFVYGM, FLLVYLVMMIATFLFKLGAFP, IVATIPKVAAFAMLVNILFVG, WIYLFRIIGILSIFFGSLVAL, LLGYSTVSQIGFVLLATTLNP, VIVYLFTTLAVFGVLTTISVG, AFILLIVLFSMAGIPPFGGFI, GNYFLACFVLFMAVIASFYYV, and LIALSINGLVLLFLGIMPMLL.

This sequence belongs to the complex I subunit 2 family. As to quaternary structure, NDH-1 is composed of 14 different subunits. Subunits NuoA, H, J, K, L, M, N constitute the membrane sector of the complex.

It localises to the cell inner membrane. It catalyses the reaction a quinone + NADH + 5 H(+)(in) = a quinol + NAD(+) + 4 H(+)(out). NDH-1 shuttles electrons from NADH, via FMN and iron-sulfur (Fe-S) centers, to quinones in the respiratory chain. The immediate electron acceptor for the enzyme in this species is believed to be ubiquinone. Couples the redox reaction to proton translocation (for every two electrons transferred, four hydrogen ions are translocated across the cytoplasmic membrane), and thus conserves the redox energy in a proton gradient. The protein is NADH-quinone oxidoreductase subunit N of Francisella tularensis subsp. holarctica (strain FTNF002-00 / FTA).